A 1040-amino-acid chain; its full sequence is MQVLPPSSTGGPSRLFIMRPVATTLLMVAILLAGIIGYRALPVSALPEVDYPTIQVVTLYPGASPDVMTSAVTAPLERQFGQMSGLKQMSSQSSGGASVITLQFQLTLPLDVAEQEVQAAINAATNLLPSDLPNPPVYSKVNPADPPIMTLAVTSTAMPMTQVEDMVETRVAQKISQISGVGLVTLSGGQRPAVRVKLNAQAIAALGLTSETVRTAITGANVNSAKGSLDGPSRAVTLSANDQMQSAEEYRQLIIAYQNGAPIRLGDVATVEQGAENSWLGAWANKEQAIVMNVQRQPGANIISTADSIRQMLPQLTESLPKSVKVTVLSDRTTNIRASVDDTQFELMMAIALVVMIIYLFLRNIPATIIPGVAVPLSLIGTFAVMVFLDFSINNLTLMALTIATGFVVDDAIVVIENISRYIEKGEKPLAAALKGAGEIGFTIISLTFSLIAVLIPLLFMGDIVGRLFREFAITLAVAILISAVVSLTLTPMMCARMLSQESLRKQNRFSRASEKMFDRIIAAYGRGLAKVLNHPWLTLSVALSTLLLSVLLWVFIPKGFFPVQDNGIIQGTLQAPQSSSFANMAQRQRQVADVILQDPAVQSLTSFVGVDGTNPSLNSARLQINLKPLDERDDRVQKVIARLQTAVDKVPGVDLFLQPTQDLTIDTQVSRTQYQFTLQATSLDALSTWVPQLMEKLQQLPQISDVSSDWQDKGLVAYVNVDRDSASRLGISMADVDNALYNAFGQRLISTIYTQANQYRVVLEHNTENTPGLAALDTIRLTSSDGGVVPLSSIAKIEQRFAPLSINHLDQFPVTTISFNVPDNYSLGDAVQAIMDTEKTLNLPVDITTQFQGSTLAFQSALGSTVWLIVAAVVAMYIVLGILYESFIHPITILSTLPTAGVGALLALMIAGSELDVIAIIGIILLIGIVKKNAIMMIDFALAAEREQGMSPRDAIYQACLLRFRPILMTTLAALLGALPLMLSTGVGAELRRPLGIGMVGGLIVSQVLTLFTTPVIYLLFDRLALWTKSRFARHEEEA.

The next 11 helical transmembrane spans lie at Leu-15 to Gly-37, Phe-345 to Leu-362, Ala-367 to Leu-389, Leu-396 to Asn-418, Gly-438 to Phe-460, Phe-472 to Met-494, His-535 to Ile-557, Val-867 to Ile-889, Leu-909 to Val-931, Ile-968 to Ala-990, and Met-1000 to Phe-1022.

This sequence belongs to the resistance-nodulation-cell division (RND) (TC 2.A.6) family. MdtB subfamily. In terms of assembly, part of a tripartite efflux system composed of MdtA, MdtB and MdtC. MdtB forms a heteromultimer with MdtC.

The protein resides in the cell inner membrane. Its function is as follows. The MdtABC tripartite complex confers resistance against novobiocin and deoxycholate. This chain is Multidrug resistance protein MdtB, found in Escherichia coli O157:H7.